The following is a 347-amino-acid chain: NADH-quinone oxidoreductase subunit H (347 aa).

8 helical membrane passes run 25 to 45, 95 to 115, 128 to 148, 168 to 188, 200 to 220, 251 to 271, 284 to 304, and 324 to 344; these read ILFM…VAAM, FMFT…FAII, IGIL…LFGG, ISYE…TGSF, GWYI…GVAV, FFIG…CLFF, FIPP…MFIL, and VCLP…LIFS.

The protein belongs to the complex I subunit 1 family. NDH-1 is composed of 14 different subunits. Subunits NuoA, H, J, K, L, M, N constitute the membrane sector of the complex.

It localises to the cell inner membrane. The enzyme catalyses a quinone + NADH + 5 H(+)(in) = a quinol + NAD(+) + 4 H(+)(out). NDH-1 shuttles electrons from NADH, via FMN and iron-sulfur (Fe-S) centers, to quinones in the respiratory chain. The immediate electron acceptor for the enzyme in this species is believed to be ubiquinone. Couples the redox reaction to proton translocation (for every two electrons transferred, four hydrogen ions are translocated across the cytoplasmic membrane), and thus conserves the redox energy in a proton gradient. This subunit may bind ubiquinone. The chain is NADH-quinone oxidoreductase subunit H from Psychrobacter arcticus (strain DSM 17307 / VKM B-2377 / 273-4).